The chain runs to 61 residues: Large ribosomal subunit protein uL30 (61 aa).

The protein belongs to the universal ribosomal protein uL30 family. As to quaternary structure, part of the 50S ribosomal subunit.

This chain is Large ribosomal subunit protein uL30, found in Treponema pallidum subsp. pallidum (strain SS14).